The chain runs to 429 residues: Enolase (429 aa).

Residue Gln165 participates in (2R)-2-phosphoglycerate binding. Glu207 acts as the Proton donor in catalysis. Residues Asp244, Glu287, and Asp314 each contribute to the Mg(2+) site. Positions 339, 368, 369, and 390 each coordinate (2R)-2-phosphoglycerate. Lys339 (proton acceptor) is an active-site residue.

This sequence belongs to the enolase family. Mg(2+) is required as a cofactor.

The protein resides in the cytoplasm. It is found in the secreted. The protein localises to the cell surface. The enzyme catalyses (2R)-2-phosphoglycerate = phosphoenolpyruvate + H2O. Its pathway is carbohydrate degradation; glycolysis; pyruvate from D-glyceraldehyde 3-phosphate: step 4/5. Functionally, catalyzes the reversible conversion of 2-phosphoglycerate (2-PG) into phosphoenolpyruvate (PEP). It is essential for the degradation of carbohydrates via glycolysis. This Roseiflexus castenholzii (strain DSM 13941 / HLO8) protein is Enolase.